The following is a 309-amino-acid chain: Protein FdhE homolog (309 aa).

The protein belongs to the FdhE family.

It is found in the cytoplasm. Functionally, necessary for formate dehydrogenase activity. The polypeptide is Protein FdhE homolog (Pseudomonas aeruginosa (strain ATCC 15692 / DSM 22644 / CIP 104116 / JCM 14847 / LMG 12228 / 1C / PRS 101 / PAO1)).